A 75-amino-acid chain; its full sequence is Protein RALF-like 9 (75 aa).

The N-terminal stretch at 1-28 (MGMSKSIKVILSLALVVFLALAATKVEA) is a signal peptide. Cystine bridges form between Cys-46/Cys-54 and Cys-66/Cys-72.

This sequence belongs to the plant rapid alkalinization factor (RALF) family.

It is found in the secreted. Functionally, cell signaling peptide that may regulate plant stress, growth, and development. Mediates a rapid alkalinization of extracellular space by mediating a transient increase in the cytoplasmic Ca(2+) concentration leading to a calcium-dependent signaling events through a cell surface receptor and a concomitant activation of some intracellular mitogen-activated protein kinases. This Arabidopsis thaliana (Mouse-ear cress) protein is Protein RALF-like 9 (RALFL9).